The chain runs to 459 residues: Flavin-containing monooxygenase FMO GS-OX5 (459 aa).

An FAD-binding site is contributed by 17-22 (GAGAAG). 212–217 (GNFASG) contributes to the NADP(+) binding site.

The protein belongs to the FMO family.

The catalysed reaction is a (Z)-omega-(methylsulfanyl)-N-sulfo-alkylhydroximate S-glucoside + NADPH + O2 + H(+) = a (Z)-omega-(methylsulfinyl)-alkyl-glucosinolate + NADP(+) + H2O. Functionally, catalyzes the conversion of methylthioalkyl glucosinolates into methylsulfinylalkyl glucosinolates. Specific for 8-methylthiooctyl (8-MTO) glucosinolates. The chain is Flavin-containing monooxygenase FMO GS-OX5 (FMOGS-OX5) from Arabidopsis thaliana (Mouse-ear cress).